The primary structure comprises 129 residues: Glycine cleavage system H protein (129 aa).

In terms of domain architecture, Lipoyl-binding spans Thr-24–Lys-106. Lys-65 carries the post-translational modification N6-lipoyllysine.

It belongs to the GcvH family. In terms of assembly, the glycine cleavage system is composed of four proteins: P, T, L and H. (R)-lipoate serves as cofactor.

The glycine cleavage system catalyzes the degradation of glycine. The H protein shuttles the methylamine group of glycine from the P protein to the T protein. The chain is Glycine cleavage system H protein from Citrobacter koseri (strain ATCC BAA-895 / CDC 4225-83 / SGSC4696).